Consider the following 313-residue polypeptide: Ribosomal RNA small subunit methyltransferase H (313 aa).

S-adenosyl-L-methionine-binding positions include 35 to 37 (GGH), aspartate 55, phenylalanine 79, aspartate 100, and glutamine 107.

This sequence belongs to the methyltransferase superfamily. RsmH family.

The protein resides in the cytoplasm. The enzyme catalyses cytidine(1402) in 16S rRNA + S-adenosyl-L-methionine = N(4)-methylcytidine(1402) in 16S rRNA + S-adenosyl-L-homocysteine + H(+). Functionally, specifically methylates the N4 position of cytidine in position 1402 (C1402) of 16S rRNA. The sequence is that of Ribosomal RNA small subunit methyltransferase H from Burkholderia mallei (strain NCTC 10247).